Reading from the N-terminus, the 446-residue chain is Phosphoglucosamine mutase (446 aa).

Catalysis depends on Ser-101, which acts as the Phosphoserine intermediate. Mg(2+) is bound by residues Ser-101, Asp-240, Asp-242, and Asp-244. Position 101 is a phosphoserine (Ser-101).

This sequence belongs to the phosphohexose mutase family. Requires Mg(2+) as cofactor. Activated by phosphorylation.

It catalyses the reaction alpha-D-glucosamine 1-phosphate = D-glucosamine 6-phosphate. Catalyzes the conversion of glucosamine-6-phosphate to glucosamine-1-phosphate. This chain is Phosphoglucosamine mutase, found in Pseudomonas entomophila (strain L48).